The chain runs to 147 residues: Spermidine export protein MdtJ (147 aa).

A run of 4 helical transmembrane segments spans residues 1-21 (MIYWIFLGLAIIAEIIGTLSM), 31-51 (TGHVVMYFMITGSYVMLSLAV), 54-74 (VALGVAYALWEGIGILIITIF), and 81-101 (ETLSPLKIAGLVTLIGGILLV). Residues 105–117 (TRKPKQPNRHRGN) are compositionally biased toward basic residues. The segment at 105–147 (TRKPKQPNRHRGNRPPSVQGLKTQTTGHHKGVAVESGEHHAAA) is disordered.

It belongs to the drug/metabolite transporter (DMT) superfamily. Small multidrug resistance (SMR) (TC 2.A.7.1) family. MdtJ subfamily. Forms a complex with MdtI.

The protein resides in the cell inner membrane. Functionally, catalyzes the excretion of spermidine. This is Spermidine export protein MdtJ from Yersinia pseudotuberculosis serotype IB (strain PB1/+).